The sequence spans 412 residues: Argininosuccinate synthase (412 aa).

ATP-binding positions include 15–23 (AYSGGLDTS) and Ala-42. Tyr-93 and Ser-98 together coordinate L-citrulline. Position 123 (Gly-123) interacts with ATP. L-aspartate contacts are provided by Thr-125, Asn-129, and Asp-130. Asn-129 provides a ligand contact to L-citrulline. Residues Arg-133, Ser-185, Ser-194, Glu-270, and Tyr-282 each coordinate L-citrulline.

Belongs to the argininosuccinate synthase family. Type 1 subfamily. As to quaternary structure, homotetramer.

It localises to the cytoplasm. The catalysed reaction is L-citrulline + L-aspartate + ATP = 2-(N(omega)-L-arginino)succinate + AMP + diphosphate + H(+). It participates in amino-acid biosynthesis; L-arginine biosynthesis; L-arginine from L-ornithine and carbamoyl phosphate: step 2/3. This chain is Argininosuccinate synthase, found in Psychrobacter arcticus (strain DSM 17307 / VKM B-2377 / 273-4).